Here is a 965-residue protein sequence, read N- to C-terminus: Argonaute protein wago-4 (965 aa).

Positions 1–34 (MPALPPVYTPSGAPSSVHAPPAVPPVPVPTQPLR) are disordered. The segment covering 10-20 (PSGAPSSVHAP) has biased composition (low complexity). The segment covering 21–30 (PAVPPVPVPT) has biased composition (pro residues). One can recognise a PAZ domain in the interval 318–428 (PILDKLKEIT…YPMELLKISS (111 aa)). In terms of domain architecture, Piwi spans 594–924 (TFVFIITDDS…YAKRGRNLWN (331 aa)).

Belongs to the argonaute family. WAGO subfamily. In terms of assembly, interacts with znfx-1; the interaction promotes the transmission of epigenetic information across generations. May interact with mina-1. In terms of tissue distribution, expressed in the hermaphrodite germline and in oocytes. Expressed at a low level in the male germline. Not expressed in the soma of hermaphrodites or males.

Its subcellular location is the cytoplasm. The protein localises to the perinuclear region. It is found in the cytoplasmic granule. Its function is as follows. Argonaute protein which is involved in the endogenous small interfering RNA (endo-siRNA) pathway and is required for RNA-mediated gene silencing (RNAi) in the germline. Interacts with secondary 22G-RNAs, which are RNA-dependent RNA polymerase-derived endo-siRNAs, typically 22 nucleotides in length with a 5'guanosine residue. Also interacts with the mRNA targets of 22G-RNAs. Associates with znfx-1 to mediate small RNA-directed transgenerational epigenetic inheritance of both germline- and soma-expressed genes. This chain is Argonaute protein wago-4, found in Caenorhabditis elegans.